The chain runs to 226 residues: ATP synthase F(0) complex subunit a (226 aa).

A run of 6 helical transmembrane segments spans residues 12 to 32, 68 to 88, 97 to 117, 138 to 158, 164 to 184, and 200 to 222; these read PTIL…LLIP, WSLM…LGLL, QLSM…ATGF, IPML…ALAV, ITAG…LSTI, and TTLE…SLYL.

The protein belongs to the ATPase A chain family. Component of the ATP synthase complex composed at least of ATP5F1A/subunit alpha, ATP5F1B/subunit beta, ATP5MC1/subunit c (homooctomer), MT-ATP6/subunit a, MT-ATP8/subunit 8, ATP5ME/subunit e, ATP5MF/subunit f, ATP5MG/subunit g, ATP5MK/subunit k, ATP5MJ/subunit j, ATP5F1C/subunit gamma, ATP5F1D/subunit delta, ATP5F1E/subunit epsilon, ATP5PF/subunit F6, ATP5PB/subunit b, ATP5PD/subunit d, ATP5PO/subunit OSCP. ATP synthase complex consists of a soluble F(1) head domain (subunits alpha(3) and beta(3)) - the catalytic core - and a membrane F(0) domain - the membrane proton channel (subunits c, a, 8, e, f, g, k and j). These two domains are linked by a central stalk (subunits gamma, delta, and epsilon) rotating inside the F1 region and a stationary peripheral stalk (subunits F6, b, d, and OSCP). Interacts with DNAJC30; interaction is direct.

The protein resides in the mitochondrion inner membrane. The catalysed reaction is H(+)(in) = H(+)(out). Subunit a, of the mitochondrial membrane ATP synthase complex (F(1)F(0) ATP synthase or Complex V) that produces ATP from ADP in the presence of a proton gradient across the membrane which is generated by electron transport complexes of the respiratory chain. ATP synthase complex consist of a soluble F(1) head domain - the catalytic core - and a membrane F(1) domain - the membrane proton channel. These two domains are linked by a central stalk rotating inside the F(1) region and a stationary peripheral stalk. During catalysis, ATP synthesis in the catalytic domain of F(1) is coupled via a rotary mechanism of the central stalk subunits to proton translocation. With the subunit c (ATP5MC1), forms the proton-conducting channel in the F(0) domain, that contains two crucial half-channels (inlet and outlet) that facilitate proton movement from the mitochondrial intermembrane space (IMS) into the matrix. Protons are taken up via the inlet half-channel and released through the outlet half-channel, following a Grotthuss mechanism. The polypeptide is ATP synthase F(0) complex subunit a (Hylobates lar (Lar gibbon)).